A 178-amino-acid polypeptide reads, in one-letter code: Napin-B (178 aa).

The first 21 residues, 1–21, serve as a signal peptide directing secretion; that stretch reads MANKLFLVSATLAFFFLLTNA. Propeptides lie at residues 22 to 38 and 75 to 94; these read SIYR…ATNP and PSWT…NPQG.

Belongs to the 2S seed storage albumins family. The mature protein consists of a small and a large chain linked by disulfide bonds. Cotyledons and the axis.

In terms of biological role, the small, basic, water-soluble napins are one of the two major kinds of storage proteins synthesized in the seed during its maturation. The sequence is that of Napin-B (NAPB) from Brassica napus (Rape).